The sequence spans 364 residues: Histidinol-phosphate aminotransferase (364 aa).

Lys-226 bears the N6-(pyridoxal phosphate)lysine mark.

Belongs to the class-II pyridoxal-phosphate-dependent aminotransferase family. Histidinol-phosphate aminotransferase subfamily. As to quaternary structure, homodimer. Pyridoxal 5'-phosphate serves as cofactor.

It carries out the reaction L-histidinol phosphate + 2-oxoglutarate = 3-(imidazol-4-yl)-2-oxopropyl phosphate + L-glutamate. It participates in amino-acid biosynthesis; L-histidine biosynthesis; L-histidine from 5-phospho-alpha-D-ribose 1-diphosphate: step 7/9. This chain is Histidinol-phosphate aminotransferase, found in Campylobacter jejuni subsp. jejuni serotype O:2 (strain ATCC 700819 / NCTC 11168).